Here is a 717-residue protein sequence, read N- to C-terminus: Photosystem I P700 chlorophyll a apoprotein A1 (717 aa).

The next 8 membrane-spanning stretches (helical) occupy residues 58 to 81 (VFSA…FHGA), 144 to 167 (LYCT…FHYH), 183 to 207 (LNHH…HVSL), 279 to 297 (IAHH…GHMY), 334 to 357 (WHAQ…HHMY), 373 to 399 (LSLF…IFMV), 421 to 443 (AIIS…LYIH), and 519 to 537 (FLVH…LILL). Positions 561 and 570 each coordinate [4Fe-4S] cluster. Transmembrane regions (helical) follow at residues 577–598 (HVFL…HFSW) and 652–674 (LSAY…MFLF). His663 lines the chlorophyll a' pocket. Chlorophyll a is bound by residues Met671 and Tyr679. A phylloquinone-binding site is contributed by Trp680. A helical transmembrane segment spans residues 712–717 (AVGVTH).

The protein belongs to the PsaA/PsaB family. The PsaA/B heterodimer binds the P700 chlorophyll special pair and subsequent electron acceptors. PSI consists of a core antenna complex that captures photons, and an electron transfer chain that converts photonic excitation into a charge separation. The eukaryotic PSI reaction center is composed of at least 11 subunits. P700 is a chlorophyll a/chlorophyll a' dimer, A0 is one or more chlorophyll a, A1 is one or both phylloquinones and FX is a shared 4Fe-4S iron-sulfur center. is required as a cofactor.

It localises to the plastid. It is found in the chloroplast thylakoid membrane. The enzyme catalyses reduced [plastocyanin] + hnu + oxidized [2Fe-2S]-[ferredoxin] = oxidized [plastocyanin] + reduced [2Fe-2S]-[ferredoxin]. In terms of biological role, psaA and PsaB bind P700, the primary electron donor of photosystem I (PSI), as well as the electron acceptors A0, A1 and FX. PSI is a plastocyanin-ferredoxin oxidoreductase, converting photonic excitation into a charge separation, which transfers an electron from the donor P700 chlorophyll pair to the spectroscopically characterized acceptors A0, A1, FX, FA and FB in turn. Oxidized P700 is reduced on the lumenal side of the thylakoid membrane by plastocyanin. This is Photosystem I P700 chlorophyll a apoprotein A1 from Drimys winteri (Winter's bark).